The sequence spans 40 residues: Natriuretic peptide HsNP-b (40 aa).

The propeptide occupies 1–8 (SGSKTAKI). The segment at 1-40 (SGSKTAKIGDGCFGVPIDHIGSTTDLGCGRPRPKPTPRGS) is disordered. A disulfide bond links Cys12 and Cys28. Residues 31–40 (PRPKPTPRGS) are compositionally biased toward basic residues.

The protein belongs to the natriuretic peptide family. In terms of tissue distribution, expressed by the venom gland.

Its subcellular location is the secreted. In terms of biological role, snake venom natriuretic peptide that targets both NPR1 and NPR2. Exhibits hypotensive and vasodepressor activities. This Hoplocephalus stephensii (Stephens's banded snake) protein is Natriuretic peptide HsNP-b.